The sequence spans 757 residues: RNA-directed RNA polymerase catalytic subunit (757 aa).

Residues S50 to G81 are disordered. The span at W55 to P64 shows a compositional bias: polar residues. Short sequence motifs (nuclear localization signal) lie at residues R187–M195 and R203–S216. The promoter-binding site stretch occupies residues R249–E256. The RdRp catalytic domain occupies V286–Y483.

Belongs to the influenza viruses polymerase PB1 family. Influenza RNA polymerase is composed of three subunits: PB1, PB2 and PA. Interacts (via N-terminus) with PA (via C-terminus). Interacts (via C-terminus) with PB2 (via N-terminus); this interaction is essential for transcription initiation. In terms of processing, phosphorylated by host PRKCA.

Its subcellular location is the host nucleus. It localises to the host cytoplasm. It carries out the reaction RNA(n) + a ribonucleoside 5'-triphosphate = RNA(n+1) + diphosphate. RNA-dependent RNA polymerase which is responsible for replication and transcription of virus RNA segments. The transcription of viral mRNAs occurs by a unique mechanism called cap-snatching. 5' methylated caps of cellular mRNAs are cleaved after 10-13 nucleotides by PA. In turn, these short capped RNAs are used as primers by PB1 for transcription of viral mRNAs. During virus replication, PB1 initiates RNA synthesis and copy vRNA into complementary RNA (cRNA) which in turn serves as a template for the production of more vRNAs. This is RNA-directed RNA polymerase catalytic subunit from Influenza A virus (strain A/Swine/Colorado/1/1977 H3N2).